A 145-amino-acid chain; its full sequence is Large ribosomal subunit protein bL9 (145 aa).

This sequence belongs to the bacterial ribosomal protein bL9 family.

In terms of biological role, binds to the 23S rRNA. In Mesomycoplasma hyopneumoniae (strain J / ATCC 25934 / NCTC 10110) (Mycoplasma hyopneumoniae), this protein is Large ribosomal subunit protein bL9.